The chain runs to 118 residues: Large ribosomal subunit protein bL20c (118 aa).

The protein belongs to the bacterial ribosomal protein bL20 family.

It is found in the plastid. It localises to the chloroplast. Functionally, binds directly to 23S ribosomal RNA and is necessary for the in vitro assembly process of the 50S ribosomal subunit. It is not involved in the protein synthesizing functions of that subunit. The polypeptide is Large ribosomal subunit protein bL20c (Adiantum capillus-veneris (Maidenhair fern)).